A 214-amino-acid polypeptide reads, in one-letter code: Thiamine-phosphate synthase (214 aa).

Residues 37 to 41 (QYREK) and asparagine 73 each bind 4-amino-2-methyl-5-(diphosphooxymethyl)pyrimidine. Mg(2+) is bound by residues aspartate 74 and aspartate 93. Serine 112 contributes to the 4-amino-2-methyl-5-(diphosphooxymethyl)pyrimidine binding site. Residue 139-141 (TIS) coordinates 2-[(2R,5Z)-2-carboxy-4-methylthiazol-5(2H)-ylidene]ethyl phosphate. Residue lysine 142 participates in 4-amino-2-methyl-5-(diphosphooxymethyl)pyrimidine binding. 2-[(2R,5Z)-2-carboxy-4-methylthiazol-5(2H)-ylidene]ethyl phosphate is bound by residues glycine 171 and 191 to 192 (IS).

The protein belongs to the thiamine-phosphate synthase family. It depends on Mg(2+) as a cofactor.

It catalyses the reaction 2-[(2R,5Z)-2-carboxy-4-methylthiazol-5(2H)-ylidene]ethyl phosphate + 4-amino-2-methyl-5-(diphosphooxymethyl)pyrimidine + 2 H(+) = thiamine phosphate + CO2 + diphosphate. The catalysed reaction is 2-(2-carboxy-4-methylthiazol-5-yl)ethyl phosphate + 4-amino-2-methyl-5-(diphosphooxymethyl)pyrimidine + 2 H(+) = thiamine phosphate + CO2 + diphosphate. It carries out the reaction 4-methyl-5-(2-phosphooxyethyl)-thiazole + 4-amino-2-methyl-5-(diphosphooxymethyl)pyrimidine + H(+) = thiamine phosphate + diphosphate. It participates in cofactor biosynthesis; thiamine diphosphate biosynthesis; thiamine phosphate from 4-amino-2-methyl-5-diphosphomethylpyrimidine and 4-methyl-5-(2-phosphoethyl)-thiazole: step 1/1. In terms of biological role, condenses 4-methyl-5-(beta-hydroxyethyl)thiazole monophosphate (THZ-P) and 2-methyl-4-amino-5-hydroxymethyl pyrimidine pyrophosphate (HMP-PP) to form thiamine monophosphate (TMP). The chain is Thiamine-phosphate synthase from Listeria monocytogenes serotype 4b (strain F2365).